The following is a 69-amino-acid chain: DNA-directed RNA polymerase subunit epsilon (69 aa).

This sequence belongs to the RNA polymerase subunit epsilon family. As to quaternary structure, RNAP is composed of a core of 2 alpha, a beta and a beta' subunit. The core is associated with a delta subunit, and at least one of epsilon or omega. When a sigma factor is associated with the core the holoenzyme is formed, which can initiate transcription.

It catalyses the reaction RNA(n) + a ribonucleoside 5'-triphosphate = RNA(n+1) + diphosphate. Functionally, a non-essential component of RNA polymerase (RNAP). The sequence is that of DNA-directed RNA polymerase subunit epsilon from Shouchella clausii (strain KSM-K16) (Alkalihalobacillus clausii).